Reading from the N-terminus, the 136-residue chain is UPF0275 protein PM0493 (136 aa).

The protein belongs to the UPF0275 family.

This Pasteurella multocida (strain Pm70) protein is UPF0275 protein PM0493.